Consider the following 509-residue polypeptide: Steroid 17-alpha-hydroxylase/17,20 lyase (509 aa).

Position 202 (Asn-202) interacts with substrate. Position 442 (Cys-442) interacts with heme.

The protein belongs to the cytochrome P450 family. Requires heme as cofactor.

The protein resides in the endoplasmic reticulum membrane. It localises to the microsome membrane. It catalyses the reaction a C21-steroid + reduced [NADPH--hemoprotein reductase] + O2 = a 17alpha-hydroxy-C21-steroid + oxidized [NADPH--hemoprotein reductase] + H2O + H(+). It carries out the reaction progesterone + reduced [NADPH--hemoprotein reductase] + O2 = 17alpha-hydroxyprogesterone + oxidized [NADPH--hemoprotein reductase] + H2O + H(+). The catalysed reaction is pregnenolone + reduced [NADPH--hemoprotein reductase] + O2 = 17alpha-hydroxypregnenolone + oxidized [NADPH--hemoprotein reductase] + H2O + H(+). The enzyme catalyses 17alpha-hydroxyprogesterone + reduced [NADPH--hemoprotein reductase] + O2 = androst-4-ene-3,17-dione + acetate + oxidized [NADPH--hemoprotein reductase] + H2O + 2 H(+). It catalyses the reaction 17alpha-hydroxyprogesterone + reduced [NADPH--hemoprotein reductase] + O2 = 16alpha,17alpha-dihydroxyprogesterone + oxidized [NADPH--hemoprotein reductase] + H2O + H(+). It carries out the reaction 16alpha,17alpha-dihydroxyprogesterone + reduced [NADPH--hemoprotein reductase] + O2 = 6beta,16alpha,17alpha-trihydroxyprogesterone + oxidized [NADPH--hemoprotein reductase] + H2O + H(+). The catalysed reaction is 17alpha-hydroxypregnenolone + reduced [NADPH--hemoprotein reductase] + O2 = 3beta-hydroxyandrost-5-en-17-one + acetate + oxidized [NADPH--hemoprotein reductase] + H2O + 2 H(+). The enzyme catalyses 16alpha,17alpha-dihydroxypregnenolone + reduced [NADPH--hemoprotein reductase] + O2 = 3beta,16alpha-dihydroxy-androst-5-en-17-one + acetate + oxidized [NADPH--hemoprotein reductase] + H2O + 2 H(+). It catalyses the reaction 3beta-hydroxyandrost-5-en-17-one + reduced [NADPH--hemoprotein reductase] + O2 = 3beta,16alpha-dihydroxy-androst-5-en-17-one + oxidized [NADPH--hemoprotein reductase] + H2O + H(+). It carries out the reaction androst-4-ene-3,17-dione + reduced [NADPH--hemoprotein reductase] + O2 = 16alpha-hydroxyandrost-4-ene-3,17-dione + oxidized [NADPH--hemoprotein reductase] + H2O + H(+). Its pathway is steroid hormone biosynthesis. It participates in steroid biosynthesis; glucocorticoid biosynthesis. With respect to regulation, regulated predominantly by intracellular cAMP levels. The 17,20-lyase activity is stimulated by cytochrome b5, which acts as an allosteric effector increasing the Vmax of the lyase activity. Functionally, a cytochrome P450 monooxygenase involved in corticoid and androgen biosynthesis. Catalyzes 17-alpha hydroxylation of C21 steroids, which is common for both pathways. A second oxidative step, required only for androgen synthesis, involves an acyl-carbon cleavage. The 17-alpha hydroxy intermediates, as part of adrenal glucocorticoids biosynthesis pathway, are precursors of cortisol. Hydroxylates steroid hormones, pregnenolone and progesterone to form 17-alpha hydroxy metabolites, followed by the cleavage of the C17-C20 bond to form C19 steroids, dehydroepiandrosterone (DHEA) and androstenedione. Has 16-alpha hydroxylase activity. Catalyzes 16-alpha hydroxylation of 17-alpha hydroxy pregnenolone, followed by the cleavage of the C17-C20 bond to form 16-alpha-hydroxy DHEA. Also 16-alpha hydroxylates androgens, relevant for estriol synthesis. Mechanistically, uses molecular oxygen inserting one oxygen atom into a substrate, and reducing the second into a water molecule, with two electrons provided by NADPH via cytochrome P450 reductase (CPR; NADPH-ferrihemoprotein reductase). The protein is Steroid 17-alpha-hydroxylase/17,20 lyase (CYP17A1) of Ovis aries (Sheep).